Consider the following 122-residue polypeptide: Small ribosomal subunit protein uS13 (122 aa).

A disordered region spans residues 95-122 (GLPVRGQRTHTNARTRKGKAKPIAGKKK).

It belongs to the universal ribosomal protein uS13 family. In terms of assembly, part of the 30S ribosomal subunit. Forms a loose heterodimer with protein S19. Forms two bridges to the 50S subunit in the 70S ribosome.

Located at the top of the head of the 30S subunit, it contacts several helices of the 16S rRNA. In the 70S ribosome it contacts the 23S rRNA (bridge B1a) and protein L5 of the 50S subunit (bridge B1b), connecting the 2 subunits; these bridges are implicated in subunit movement. Contacts the tRNAs in the A and P-sites. The sequence is that of Small ribosomal subunit protein uS13 from Sphingopyxis alaskensis (strain DSM 13593 / LMG 18877 / RB2256) (Sphingomonas alaskensis).